The chain runs to 381 residues: Creatine kinase M-type (381 aa).

The 88-residue stretch at 11–98 folds into the Phosphagen kinase N-terminal domain; sequence KLNYKPEEEY…FDPIIQDRHG (88 aa). Positions 125–367 constitute a Phosphagen kinase C-terminal domain; the sequence is YVLSSRVRTG…KLMVEMEKKL (243 aa). 128–132 contributes to the ATP binding site; that stretch reads SSRVR. A Phosphoserine modification is found at serine 164. Threonine 166 is modified (phosphothreonine). Serine 178 is subject to Phosphoserine. Threonine 180 is modified (phosphothreonine). Histidine 191 serves as a coordination point for ATP. Serine 199 bears the Phosphoserine mark. ATP contacts are provided by arginine 236 and arginine 292. Phosphothreonine is present on residues threonine 313 and threonine 322. ATP contacts are provided by residues 320 to 325 and aspartate 335; that span reads RGTGGV. The residue at position 372 (serine 372) is a Phosphoserine.

It belongs to the ATP:guanido phosphotransferase family. Dimer of identical or non-identical chains, which can be either B (brain type) or M (muscle type). With MM being the major form in skeletal muscle and myocardium, MB existing in myocardium, and BB existing in many tissues, especially brain.

The protein localises to the cytoplasm. The catalysed reaction is creatine + ATP = N-phosphocreatine + ADP + H(+). Its function is as follows. Reversibly catalyzes the transfer of phosphate between ATP and various phosphogens (e.g. creatine phosphate). Creatine kinase isoenzymes play a central role in energy transduction in tissues with large, fluctuating energy demands, such as skeletal muscle, heart, brain and spermatozoa. The protein is Creatine kinase M-type (CKM) of Canis lupus familiaris (Dog).